Consider the following 810-residue polypeptide: MATNSTKACPAPMKATSNGVFQGDNPIDFALPLAILQIVIVIVLTRVLAYLLRPLRQPRVIAEVIGGIMLGPSLLGRSKAFLDAVFPKKSLTVLETLANLGLLFFLFLAGLEIDTKALRRTGKKALGIALAGITLPFALGIGSSFVLKATISKGVNSTAFLVFMGVALSITAFPVLARILAELKLLTTEIGRLAMSAAAVNDVAAWILLALAIALSGSNTSPLVSLWVFLSGCAFVIGASFIIPPIFRWISRRCHEGEPIEETYICATLAVVLVCGFITDAIGIHSMFGAFVVGVLIPKEGPFAGALVEKVEDLVSGLFLPLYFVASGLKTNVATIQGAQSWGLLVLVTATACFGKILGTLGVSLAFKIPMREAITLGFLMNTKGLVELIVLNIGKDRKVLNDQTFAIMVLMALFTTFITTPVVMAVYKPARRAKKEGEYKHRAVERENTNTQLRILTCFHGAGSIPSMINLLEASRGIEKGEGLCVYALHLRELSERSSAILMVHKVRKNGMPFWNRRGVNADADQVVVAFQAFQQLSRVNVRPMTAISSMSDIHEDICTTAVRKKAAIVILPFHKHQQLDGSLETTRGDYRWVNRRVLLQAPCSVGIFVDRGLGGSSQVSAQDVSYSVVVLFFGGPDDREALAYGLRMAEHPGIVLTVFRFVVSPERVGEIVNVEVSNNNNENQSVKNLKSDEEIMSEIRKISSVDESVKFVEKQIENAAVDVRSAIEEVRRSNLFLVGRMPGGEIALAIRENSECPELGPVGSLLISPESSTKASVLVIQQYNGTGIAPDLGAAETEVLTSTDKDSD.

Helical transmembrane passes span 29 to 49 (FALPLAILQIVIVIVLTRVLA), 59 to 76 (RVIAEVIGGIMLGPSLLG), 91 to 111 (LTVLETLANLGLLFFLFLAGL), 126 to 146 (LGIALAGITLPFALGIGSSFV), 157 to 177 (STAFLVFMGVALSITAFPVLA), 193 to 213 (LAMSAAAVNDVAAWILLALAI), 223 to 243 (LVSLWVFLSGCAFVIGASFII), 277 to 297 (FITDAIGIHSMFGAFVVGVLI), 314 to 334 (LVSGLFLPLYFVASGLKTNVA), 343 to 363 (GLLVLVTATACFGKILGTLGV), 374 to 394 (AITLGFLMNTKGLVELIVLNI), and 406 to 426 (FAIMVLMALFTTFITTPVVMA). Ser804 is subject to Phosphoserine.

Belongs to the monovalent cation:proton antiporter 2 (CPA2) transporter (TC 2.A.37) family. CHX (TC 2.A.37.4) subfamily. As to expression, expressed in roots.

It is found in the membrane. In terms of biological role, may operate as a cation/H(+) antiporter. The protein is Cation/H(+) antiporter 18 (CHX18) of Arabidopsis thaliana (Mouse-ear cress).